Here is an 874-residue protein sequence, read N- to C-terminus: Ribosome biogenesis protein ERB1 (874 aa).

A disordered region spans residues 1–148 (MAKKEVSASK…DAFAAADAAT (148 aa)). Positions 27–41 (QAVEKEEAEKEKEEG) are enriched in basic and acidic residues. A compositionally biased stretch (acidic residues) spans 55–77 (PESDSDDEGAAAAEEEEEEEEQQ). The span at 78 to 89 (QDVKELDLDKGE) shows a compositional bias: basic and acidic residues. Acidic residues-rich tracts occupy residues 95–104 (SDAEDFDSEE) and 128–139 (PKEDGDEQDEQD). The tract at residues 312–429 (RFVPSKHEAK…LRLVPGYQDS (118 aa)) is required for interaction with NOP7. The tract at residues 429–465 (SVRERFERSLDLYLAPRLRKNKLNIDPESLIPELPSP) is required for interaction with YTM1. 2 WD repeats span residues 481 to 520 (GHTG…QVFK) and 529 to 569 (NGED…FEIE). Residues 593–602 (KVKGEDTKGD) are compositionally biased toward basic and acidic residues. Residues 593–640 (KVKGEDTKGDLDDDEEEEEEEEDDDDDEGQGKVKAHNSTAPAKKDVAK) form a disordered region. Over residues 603–620 (LDDDEEEEEEEEDDDDDE) the composition is skewed to acidic residues. WD repeat units follow at residues 658–700 (QCRR…SQSP), 703–741 (KSKG…LLKK), 744–783 (PGVR…TPYK), 787–827 (YHEK…DLMT), and 843–874 (INQI…LWTT).

This sequence belongs to the WD repeat BOP1/ERB1 family. In terms of assembly, component of the NOP7 complex, composed of ERB1, NOP7 and YTM1. The complex is held together by ERB1, which interacts with NOP7 via its N-terminal domain and with YTM1 via a high-affinity interaction between the seven-bladed beta-propeller domains of the 2 proteins. The NOP7 complex associates with the 66S pre-ribosome.

The protein localises to the nucleus. The protein resides in the nucleolus. It localises to the nucleoplasm. In terms of biological role, component of the NOP7 complex, which is required for maturation of the 25S and 5.8S ribosomal RNAs and formation of the 60S ribosome. This is Ribosome biogenesis protein ERB1 from Lodderomyces elongisporus (strain ATCC 11503 / CBS 2605 / JCM 1781 / NBRC 1676 / NRRL YB-4239) (Yeast).